The sequence spans 242 residues: HTH domain-truncated transcriptional regulator QseD (242 aa).

The protein belongs to the LysR transcriptional regulatory family.

Represses EHEC virulence expression. Down-regulates expression of LEE (locus of enterocyte effacement) and iraD genes, and alters AE (attaching and effacing) lesion formation. May regulate transcription through interactions with another HTH DNA-binding protein. The protein is HTH domain-truncated transcriptional regulator QseD (qseD) of Escherichia coli O157:H7.